Consider the following 340-residue polypeptide: L-threonine 3-dehydrogenase (340 aa).

A Zn(2+)-binding site is contributed by C38. Residues T40 and H43 each act as charge relay system in the active site. Zn(2+)-binding residues include H63, E64, C93, C96, C99, and C107. NAD(+) is bound by residues I175, D195, R200, 261–263 (LGI), and 285–286 (IY).

This sequence belongs to the zinc-containing alcohol dehydrogenase family. As to quaternary structure, homotetramer. It depends on Zn(2+) as a cofactor.

Its subcellular location is the cytoplasm. The enzyme catalyses L-threonine + NAD(+) = (2S)-2-amino-3-oxobutanoate + NADH + H(+). It participates in amino-acid degradation; L-threonine degradation via oxydo-reductase pathway; glycine from L-threonine: step 1/2. In terms of biological role, catalyzes the NAD(+)-dependent oxidation of L-threonine to 2-amino-3-ketobutyrate. In Stenotrophomonas maltophilia (strain K279a), this protein is L-threonine 3-dehydrogenase.